The sequence spans 194 residues: Imidazoleglycerol-phosphate dehydratase (194 aa).

This sequence belongs to the imidazoleglycerol-phosphate dehydratase family.

Its subcellular location is the cytoplasm. The enzyme catalyses D-erythro-1-(imidazol-4-yl)glycerol 3-phosphate = 3-(imidazol-4-yl)-2-oxopropyl phosphate + H2O. Its pathway is amino-acid biosynthesis; L-histidine biosynthesis; L-histidine from 5-phospho-alpha-D-ribose 1-diphosphate: step 6/9. The chain is Imidazoleglycerol-phosphate dehydratase from Bacillus cereus (strain AH187).